Reading from the N-terminus, the 474-residue chain is MKKTTLALSALALSLGLALSPLSATAAETSSATTAQQMPSLAPMLEKVMPSVVSINVEGSTTVNTPRMPRNFQQFFGDDSPFCQEGSPFQSSPFCQGGQGGNGGGQQQKFMALGSGVIIDADKGYVVTNNHVVDNATVIKVQLSDGRKFDAKMVGKDPRSDIALIQIQNPKNLTAIKMADSDALRVGDYTVAIGNPFGLGETVTSGIVSALGRSGLNAENYENFIQTDAAINRGNSGGALVNLNGELIGINTAILAPDGGNIGIGFAIPSNMVKNLTSQMVEYGQVKRGELGIMGTELNSELAKAMKVDAQRGAFVSQVLPNSSAAKAGIKAGDVITSLNGKPISSFAALRAQVGTMPVGSKLTLGLLRDGKQVNVNLELQQSSQNQVDSSSIFNGIEGAEMSNKGKDQGVVVNNVKTGTPAAQIGLKKGDVIIGANQQAVKNIAELRKVLDSKPSVLALNIQRGDSTIYLLMQ.

Positions 1 to 26 (MKKTTLALSALALSLGLALSPLSATA) are cleaved as a signal peptide. E58 is a binding site for substrate. Cysteines 83 and 95 form a disulfide. Residues H131, D161, 234-236 (GNS), 252-256 (TAILA), and 291-295 (LGIMG) contribute to the substrate site. Active-site charge relay system residues include H131, D161, and S236. 2 PDZ domains span residues 280 to 371 (MVEY…LRDG) and 377 to 466 (NLEL…QRGD).

The protein belongs to the peptidase S1C family. As to quaternary structure, degP can reversibly switch between different oligomeric forms that represent inactive (6-mer) and active (12- and 24-mer) protease states. Substrate binding triggers the conversion of the resting DegP trimer and hexamer into catalytically active 12- and 24-mers. The conversion of 6-mer (DegP6) into 12-mer (DegP12) or 24-mer (DegP24) is crucial in regulating protease activity.

It is found in the cell inner membrane. It catalyses the reaction Acts on substrates that are at least partially unfolded. The cleavage site P1 residue is normally between a pair of hydrophobic residues, such as Val-|-Val.. Its function is as follows. DegP acts as a chaperone at low temperatures but switches to a peptidase (heat shock protein) at higher temperatures. It degrades transiently denatured and unfolded proteins which accumulate in the periplasm following heat shock or other stress conditions. DegP is efficient with Val-Xaa and Ile-Xaa peptide bonds, suggesting a preference for beta-branched side chain amino acids. Only unfolded proteins devoid of disulfide bonds appear capable of being cleaved, thereby preventing non-specific proteolysis of folded proteins. Its proteolytic activity is essential for the survival of cells at elevated temperatures. It can degrade IciA, ada, casein, globin and PapA. DegP shares specificity with DegQ. DegP is also involved in the biogenesis of partially folded outer-membrane proteins (OMP). This chain is Periplasmic serine endoprotease DegP (degP), found in Escherichia coli O157:H7.